The chain runs to 673 residues: Glycine--tRNA ligase beta subunit (673 aa).

Belongs to the class-II aminoacyl-tRNA synthetase family. Tetramer of two alpha and two beta subunits.

The protein resides in the cytoplasm. It carries out the reaction tRNA(Gly) + glycine + ATP = glycyl-tRNA(Gly) + AMP + diphosphate. In Lactococcus lactis subsp. cremoris (strain SK11), this protein is Glycine--tRNA ligase beta subunit.